Reading from the N-terminus, the 137-residue chain is Large ribosomal subunit protein uL16c (137 aa).

This sequence belongs to the universal ribosomal protein uL16 family. As to quaternary structure, part of the 50S ribosomal subunit.

The protein localises to the plastid. Its subcellular location is the chloroplast. This Bigelowiella natans (Pedinomonas minutissima) protein is Large ribosomal subunit protein uL16c.